We begin with the raw amino-acid sequence, 492 residues long: Glutamate--cysteine ligase A, chloroplastic (492 aa).

Cysteine 156 and cysteine 376 are disulfide-bonded.

This sequence belongs to the carboxylate-amine ligase family. Glutamate--cysteine ligase type 2 subfamily. In terms of assembly, homodimer or monomer when oxidized or reduced, respectively. In terms of processing, the Cys-156-Cys-376 disulfide bridge is known to modulate the enzyme activity according to the redox status. The oxidized form constitutes the active enzyme.

The protein resides in the plastid. It localises to the chloroplast. It catalyses the reaction L-cysteine + L-glutamate + ATP = gamma-L-glutamyl-L-cysteine + ADP + phosphate + H(+). It functions in the pathway sulfur metabolism; glutathione biosynthesis; glutathione from L-cysteine and L-glutamate: step 1/2. This Oryza sativa subsp. japonica (Rice) protein is Glutamate--cysteine ligase A, chloroplastic (GSH1-1).